The following is a 456-amino-acid chain: MLITTVHGQQIEINNIDTNHGYLLFSDKPVQIPSSFEHHCLRINLTEIDTIADYFEQRLRTDYHAPQVKFLYNKMRRELAGIALRHRNKRGLINIVGSVFKYLFGTLDENDRVDIQRKLETNAHNSVNLHELNDAIQLINDGMQKIQNYENNSNIINSLLYELMQFTEYIEDVEMGMQLSRLGLFNPKLLNYDKLENVNSQNILNIKTSTWINYNDNQLLIISHIPINFSLINTVKIIPYPDSNGYQLEYTDTQSYFERENKVYNNENKEINNECVTNIIKHLKPICNFESIHTDEIIKYIEPNTIVTWNLTQTSLKQNCQNSFNNIKIKGNKMIKVTQCKIEINSIILSENLFKPEIDLTPLYTPLNITKIKTVKHNDINEMISQNNITLYIFMTTVIIILILLYLYLRYVSFNPFMMLYAKLKLRKNQNQNTAQQIEMEDVPLPLLYPSIPAQV.

Asn-44, Asn-151, Asn-228, Asn-310, Asn-368, and Asn-388 each carry an N-linked (GlcNAc...) asparagine glycan.

The polypeptide is Retrovirus-related Env polyprotein from copia-like transposable element 17.6 (env) (Drosophila melanogaster (Fruit fly)).